A 680-amino-acid chain; its full sequence is MTAEPNKPCQIKRDYPQLINLYPATAHNDAHYLSKLSIYQQRVFEAHSQQKLLVLGQMGLGNGLELLSWWRTQTNPNQRLLLKVFEPHPINAYELKLLWDQSASLAKVPELELLAQRLLHTEPTAIIGCQRLIFDDGRTTIDLHFGDIQSQLSSLIHSPLHPVQHWLVLPHLQNGLHQQIHWQMAKLSDDSATVATIGLNESSGLSETTVNRFQACGFEVRDFTCAEIQTNPQPDAILLHERHVLRRQDAKAYAFNPMAAILSSDAPSSIAIIGGGLASAHLALSLAERGQSTQIFCKDAKLGQGASGNRQGAIYPLLTPENDELSRFFQQAFLFSRRRVQALTSAPAPNQTPISHNFCGVLQTAHDERSQLRLDKIIQSQNWPSEIAYRVDAQQANCLANINIDKSGFFYPLAGWVCPYEYAEAALQKAQQLTEVKLHLETEILEIEHQSEGWYLITAKHRFGPFAQVVLANGAALTQFDASNKLQISPFRGQVSHVPAQFQLSQLATVLCANGYLTPSHEGLHCLGASYVKEPKHLDFCPQEQQENLAKMHESYPDQGWLDDIDMSGNNARVGVRMVTRDHFPMMGCAPDVPKIIKDYAQHQLTKESRHYWQTTPAPVHEGLYILGGLGSRGLSSGPLAAECLAAQLCSEPIPLDKATLCKLNPNRMWLRKLLKGKSL.

A tRNA (mnm(5)s(2)U34)-methyltransferase region spans residues 1–267; the sequence is MTAEPNKPCQ…MAAILSSDAP (267 aa). Positions 273–680 are FAD-dependent cmnm(5)s(2)U34 oxidoreductase; it reads IGGGLASAHL…LRKLLKGKSL (408 aa).

This sequence in the N-terminal section; belongs to the methyltransferase superfamily. tRNA (mnm(5)s(2)U34)-methyltransferase family. The protein in the C-terminal section; belongs to the DAO family. FAD is required as a cofactor.

It is found in the cytoplasm. The enzyme catalyses 5-aminomethyl-2-thiouridine(34) in tRNA + S-adenosyl-L-methionine = 5-methylaminomethyl-2-thiouridine(34) in tRNA + S-adenosyl-L-homocysteine + H(+). Its function is as follows. Catalyzes the last two steps in the biosynthesis of 5-methylaminomethyl-2-thiouridine (mnm(5)s(2)U) at the wobble position (U34) in tRNA. Catalyzes the FAD-dependent demodification of cmnm(5)s(2)U34 to nm(5)s(2)U34, followed by the transfer of a methyl group from S-adenosyl-L-methionine to nm(5)s(2)U34, to form mnm(5)s(2)U34. The sequence is that of tRNA 5-methylaminomethyl-2-thiouridine biosynthesis bifunctional protein MnmC from Shewanella sp. (strain W3-18-1).